A 462-amino-acid polypeptide reads, in one-letter code: tRNA(Ile)-lysidine synthase (462 aa).

27–32 (SGGPDS) serves as a coordination point for ATP.

The protein belongs to the tRNA(Ile)-lysidine synthase family.

Its subcellular location is the cytoplasm. The catalysed reaction is cytidine(34) in tRNA(Ile2) + L-lysine + ATP = lysidine(34) in tRNA(Ile2) + AMP + diphosphate + H(+). In terms of biological role, ligates lysine onto the cytidine present at position 34 of the AUA codon-specific tRNA(Ile) that contains the anticodon CAU, in an ATP-dependent manner. Cytidine is converted to lysidine, thus changing the amino acid specificity of the tRNA from methionine to isoleucine. The polypeptide is tRNA(Ile)-lysidine synthase (Clostridioides difficile (strain 630) (Peptoclostridium difficile)).